The following is a 251-amino-acid chain: 1-(5-phosphoribosyl)-5-[(5-phosphoribosylamino)methylideneamino] imidazole-4-carboxamide isomerase (251 aa).

Asp7 functions as the Proton acceptor in the catalytic mechanism. Asp131 serves as the catalytic Proton donor.

Belongs to the HisA/HisF family.

Its subcellular location is the cytoplasm. It carries out the reaction 1-(5-phospho-beta-D-ribosyl)-5-[(5-phospho-beta-D-ribosylamino)methylideneamino]imidazole-4-carboxamide = 5-[(5-phospho-1-deoxy-D-ribulos-1-ylimino)methylamino]-1-(5-phospho-beta-D-ribosyl)imidazole-4-carboxamide. It participates in amino-acid biosynthesis; L-histidine biosynthesis; L-histidine from 5-phospho-alpha-D-ribose 1-diphosphate: step 4/9. This Blochmanniella floridana protein is 1-(5-phosphoribosyl)-5-[(5-phosphoribosylamino)methylideneamino] imidazole-4-carboxamide isomerase.